Consider the following 695-residue polypeptide: HIPL1 protein (695 aa).

Positions 1 to 23 (MKLHQFLVFLFLFLSCFALSSWA) are cleaved as a signal peptide. Residues Asn37, Asn67, Asn107, Asn113, Asn128, Asn151, Asn175, Asn190, Asn208, Asn337, Asn429, Asn511, Asn527, Asn641, and Asn648 are each glycosylated (N-linked (GlcNAc...) asparagine). Ser665 carries GPI-anchor amidated serine lipidation. The propeptide at 666–695 (SSCYKHINGFHGSLVVLFVSLSLILLGLLN) is removed in mature form.

This sequence belongs to the PQQ oxidoreductase GdhB family. It depends on pyrroloquinoline quinone as a cofactor.

The protein resides in the cell membrane. This chain is HIPL1 protein (HIPL1), found in Arabidopsis thaliana (Mouse-ear cress).